The primary structure comprises 881 residues: Low-affinity phosphate transporter PHO90 (881 aa).

Positions 1-288 constitute an SPX domain; sequence MRFSHFLKYN…HLNTRTELIE (288 aa). Transmembrane regions (helical) follow at residues 417-437, 456-476, 493-513, 514-534, 539-559, 581-601, 663-683, 691-711, 718-738, 758-778, 805-825, and 854-874; these read IYFI…NDAA, AIPL…FKVL, ILAA…TLGE, VLAQ…FAGC, VLLM…NVAA, AQAL…SSPI, FTVK…LWCV, FGSS…TGLL, AFPW…KAVS, GVFA…TFVS, ILVF…SSGF, and ASIL…ASVV.

It belongs to the CitM (TC 2.A.11) transporter family.

The protein localises to the membrane. Functionally, low-affinity phosphate transporter involved in the control of cellular phosphate levels. The sequence is that of Low-affinity phosphate transporter PHO90 (PHO90) from Saccharomyces cerevisiae (strain ATCC 204508 / S288c) (Baker's yeast).